The chain runs to 457 residues: Glutamate--tRNA ligase 1 (457 aa).

Residues 9-19 carry the 'HIGH' region motif; the sequence is PSPTGYIHIGN. The 'KMSKS' region motif lies at 250 to 254; it reads GLSKR. Lys253 is a binding site for ATP.

Belongs to the class-I aminoacyl-tRNA synthetase family. Glutamate--tRNA ligase type 1 subfamily. In terms of assembly, monomer.

It is found in the cytoplasm. It carries out the reaction tRNA(Glu) + L-glutamate + ATP = L-glutamyl-tRNA(Glu) + AMP + diphosphate. Catalyzes the attachment of glutamate to tRNA(Glu) in a two-step reaction: glutamate is first activated by ATP to form Glu-AMP and then transferred to the acceptor end of tRNA(Glu). The protein is Glutamate--tRNA ligase 1 of Brucella canis (strain ATCC 23365 / NCTC 10854 / RM-666).